The sequence spans 381 residues: Queuine tRNA-ribosyltransferase (381 aa).

The Proton acceptor role is filled by Asp-96. Residues 96 to 100 (DSGGF), Asp-150, Gln-193, and Gly-220 contribute to the substrate site. The interval 251-257 (GVGAPDS) is RNA binding. The Nucleophile role is filled by Asp-270. Positions 275–279 (TRIAR) are RNA binding; important for wobble base 34 recognition. Residues Cys-308, Cys-310, Cys-313, and His-339 each contribute to the Zn(2+) site.

It belongs to the queuine tRNA-ribosyltransferase family. Homodimer. Within each dimer, one monomer is responsible for RNA recognition and catalysis, while the other monomer binds to the replacement base PreQ1. Zn(2+) serves as cofactor.

It catalyses the reaction 7-aminomethyl-7-carbaguanine + guanosine(34) in tRNA = 7-aminomethyl-7-carbaguanosine(34) in tRNA + guanine. Its pathway is tRNA modification; tRNA-queuosine biosynthesis. Its function is as follows. Catalyzes the base-exchange of a guanine (G) residue with the queuine precursor 7-aminomethyl-7-deazaguanine (PreQ1) at position 34 (anticodon wobble position) in tRNAs with GU(N) anticodons (tRNA-Asp, -Asn, -His and -Tyr). Catalysis occurs through a double-displacement mechanism. The nucleophile active site attacks the C1' of nucleotide 34 to detach the guanine base from the RNA, forming a covalent enzyme-RNA intermediate. The proton acceptor active site deprotonates the incoming PreQ1, allowing a nucleophilic attack on the C1' of the ribose to form the product. After dissociation, two additional enzymatic reactions on the tRNA convert PreQ1 to queuine (Q), resulting in the hypermodified nucleoside queuosine (7-(((4,5-cis-dihydroxy-2-cyclopenten-1-yl)amino)methyl)-7-deazaguanosine). The sequence is that of Queuine tRNA-ribosyltransferase from Enterococcus faecalis (strain ATCC 700802 / V583).